We begin with the raw amino-acid sequence, 212 residues long: Probable GTP-binding protein EngB (212 aa).

Residues 27–201 (GGIEIAFAGR…TRILSDWYQP (175 aa)) form the EngB-type G domain. Residues 35–42 (GRSNAGKS), 62–66 (GRTQL), 80–83 (DLPG), 147–150 (TKAD), and 180–182 (FSS) each bind GTP. The Mg(2+) site is built by Ser-42 and Thr-64.

This sequence belongs to the TRAFAC class TrmE-Era-EngA-EngB-Septin-like GTPase superfamily. EngB GTPase family. Requires Mg(2+) as cofactor.

Necessary for normal cell division and for the maintenance of normal septation. The chain is Probable GTP-binding protein EngB from Tolumonas auensis (strain DSM 9187 / NBRC 110442 / TA 4).